Consider the following 320-residue polypeptide: TATA box-binding protein-like 2 (320 aa).

It belongs to the TBP family. As to expression, expression is restricted to the gonads, and is higher in the ovary than the testis.

It is found in the nucleus. Functionally, TATA box-binding transcription factor. Members of the TBP family are differentially required to regulate transcription and development during early embryogenesis. Required for gastrulation. Regulates a large subset of genes that are ventrally expressed. Binds to a subset of promoters. The protein is TATA box-binding protein-like 2 of Xenopus laevis (African clawed frog).